The sequence spans 435 residues: Enolase (435 aa).

Gln163 is a (2R)-2-phosphoglycerate binding site. The active-site Proton donor is the Glu205. The Mg(2+) site is built by Asp243, Glu292, and Asp319. (2R)-2-phosphoglycerate is bound by residues Lys344, Arg373, Ser374, and Lys395. Catalysis depends on Lys344, which acts as the Proton acceptor.

This sequence belongs to the enolase family. The cofactor is Mg(2+).

The protein resides in the cytoplasm. It is found in the secreted. It localises to the cell surface. The catalysed reaction is (2R)-2-phosphoglycerate = phosphoenolpyruvate + H2O. The protein operates within carbohydrate degradation; glycolysis; pyruvate from D-glyceraldehyde 3-phosphate: step 4/5. Functionally, catalyzes the reversible conversion of 2-phosphoglycerate (2-PG) into phosphoenolpyruvate (PEP). It is essential for the degradation of carbohydrates via glycolysis. The sequence is that of Enolase from Streptococcus equi subsp. zooepidemicus (strain MGCS10565).